Reading from the N-terminus, the 414-residue chain is Alanine--glyoxylate aminotransferase (414 aa).

The transit peptide at 1–23 (MFRALARASATLGPQVAGWARTM) directs the protein to the mitochondrion. At lysine 231 the chain carries N6-(pyridoxal phosphate)lysine. Lysine 247 bears the N6-acetyllysine; alternate mark. N6-succinyllysine; alternate is present on lysine 247. N6-acetyllysine occurs at positions 256 and 334. A substrate-binding site is contributed by arginine 382. The Microbody targeting signal signature appears at 412–414 (NKL).

The protein belongs to the class-V pyridoxal-phosphate-dependent aminotransferase family. Homodimer. The cofactor is pyridoxal 5'-phosphate.

It localises to the peroxisome. The protein resides in the mitochondrion matrix. The catalysed reaction is L-serine + pyruvate = 3-hydroxypyruvate + L-alanine. It catalyses the reaction glyoxylate + L-alanine = glycine + pyruvate. Its function is as follows. Catalyzes the transamination of glyoxylate to glycine and contributes to the glyoxylate detoxification. In terms of biological role, catalyzes the transamination between L-serine and pyruvate and contributes to gluconeogenesis from the L-serine metabolism. The polypeptide is Alanine--glyoxylate aminotransferase (Felis catus (Cat)).